A 385-amino-acid polypeptide reads, in one-letter code: Exopolygalacturonase rpg15 (385 aa).

Positions 1–26 (MVRFISFTSPIAALLLLSFGVKHAST) are cleaved as a signal peptide. Asn143, Asn161, Asn164, and Asn180 each carry an N-linked (GlcNAc...) asparagine glycan. PbH1 repeat units follow at residues 165 to 195 (STNL…DLYH), 196 to 217 (SSGI…AIKE), 219 to 241 (VEKV…GSLG), and 249 to 270 (VKHV…RVKT). Asp210 functions as the Proton donor in the catalytic mechanism. Residues Cys212 and Cys229 are joined by a disulfide bond. Asn226 carries N-linked (GlcNAc...) asparagine glycosylation. Residue His233 is part of the active site. N-linked (GlcNAc...) asparagine glycosylation is found at Asn256, Asn319, and Asn343. The cysteines at positions 344 and 350 are disulfide-linked. The PbH1 5 repeat unit spans residues 350-376 (CSDITFSGIDITKASNTTDNVCVYLEG). A glycan (N-linked (GlcNAc...) asparagine) is linked at Asn365.

It belongs to the glycosyl hydrolase 28 family. Post-translationally, N-glycosylated.

It localises to the secreted. It carries out the reaction [(1-&gt;4)-alpha-D-galacturonosyl](n) + H2O = alpha-D-galacturonate + [(1-&gt;4)-alpha-D-galacturonosyl](n-1). Specific in hydrolyzing the terminal glycosidic bond of polygalacturonic acid and oligogalacturonates. This is Exopolygalacturonase rpg15 from Rhizopus delemar (strain RA 99-880 / ATCC MYA-4621 / FGSC 9543 / NRRL 43880) (Mucormycosis agent).